A 150-amino-acid chain; its full sequence is Ribonuclease H (150 aa).

The region spanning glycine 3–alanine 144 is the RNase H type-1 domain. Aspartate 12, glutamate 50, aspartate 72, and aspartate 136 together coordinate Mg(2+).

It belongs to the RNase H family. Monomer. Requires Mg(2+) as cofactor.

It is found in the cytoplasm. The catalysed reaction is Endonucleolytic cleavage to 5'-phosphomonoester.. Functionally, endonuclease that specifically degrades the RNA of RNA-DNA hybrids. The sequence is that of Ribonuclease H from Parvibaculum lavamentivorans (strain DS-1 / DSM 13023 / NCIMB 13966).